Consider the following 500-residue polypeptide: Glycerol kinase (500 aa).

Thr-12 lines the ADP pocket. Residues Thr-12, Thr-13, and Ser-14 each contribute to the ATP site. Position 12 (Thr-12) interacts with sn-glycerol 3-phosphate. Arg-16 provides a ligand contact to ADP. Sn-glycerol 3-phosphate-binding residues include Arg-82, Glu-83, Tyr-135, and Asp-245. Positions 82, 83, 135, 245, and 246 each coordinate glycerol. Positions 267 and 310 each coordinate ADP. Residues Thr-267, Gly-310, Gln-314, and Gly-411 each contribute to the ATP site. ADP is bound by residues Gly-411 and Asn-415.

This sequence belongs to the FGGY kinase family. Homotetramer and homodimer (in equilibrium).

It catalyses the reaction glycerol + ATP = sn-glycerol 3-phosphate + ADP + H(+). The protein operates within polyol metabolism; glycerol degradation via glycerol kinase pathway; sn-glycerol 3-phosphate from glycerol: step 1/1. Its activity is regulated as follows. Activated by phosphorylation and inhibited by fructose 1,6-bisphosphate (FBP). In terms of biological role, key enzyme in the regulation of glycerol uptake and metabolism. Catalyzes the phosphorylation of glycerol to yield sn-glycerol 3-phosphate. The protein is Glycerol kinase of Clostridium perfringens (strain 13 / Type A).